A 721-amino-acid chain; its full sequence is MQNYSRTDFAQVGTTNRGCMRVIPSDKEKEHDLIVVGGQNGSLICLSRKSNDTTIIFKTQPGYPVQSLALGGPASSKKKDKIFVASQNTVRGVNRKGKTFFSMETNMAEVANRMFVRGLDVVLTGRKSYSRYHDTVDSNSYLCTEDIHDVVSLVFEEAWGSREYTSILACGNSTLQIIEGNNFAYDVRLDSVPFTVSLFMGDGGHTKLLVLYGTKTGRLGLVSVPQGGGKILWEIDTTSGACVTTIVCFNVTGGQFPDIIVGKEDGLIEIYVIDETDHAHLFGTFSCDESITGISCGHVSSKSEIDIIICTFTGWLFSLAKTSRPMIENLPVAANFSVKMQQLRSEVEELQTKVNEERLRYEEITKRQGSGTGSTFFHSFQVHENFEYSAAHGAYNLTIELVIPIDFVVVQSQLPIRLMEVEKNASVVSEVRQDALNPWPLLASYRCQANVCRLELRVQANEGDSGVINLYVCPKVMPKCAQITTHYIKALSSHMRSHDFDLYRPMNTLQFTGNFSIAEAHAWLHNLLPNVPSKCPPADTITNNYQCSVNGGTQLQVVYSKGSAVFRSDCMTTICIIRDKVSEQTMKMQIRVEVACELNQDSVNHCLKLIDPKITSMLNIEKNKLYAAALKELESNNDDVFSFLSAANAKILKDHDAIYEKSEGVSIEDSGVLAILENLMVARGKLTGRSSKGRGDAIRDLISTDYSLENMQTLFKNAMND.

As to quaternary structure, part of BBSome complex, that contains at least bbs-1, bbs-2, bbs-4, bbs-5, osm-12, bbs-8/ttc-8 and bbs-9. Interacts with bbs-1. In terms of tissue distribution, expressed in ciliated cells including amphid and both inner and outer labial neurons of the head and in both phasmid neurons PHA and PHB in the tail at larval stages L1 and L2.

It is found in the cell projection. It localises to the cilium. Its subcellular location is the cytoplasm. The protein localises to the cytoskeleton. The protein resides in the cilium basal body. It is found in the cilium axoneme. Component of the BBSome complex. The BBSome complex is thought to function as a coat complex required for sorting of specific membrane proteins to the primary cilia. The BBSome complex is required for ciliogenesis but is dispensable for centriolar satellite function. Required for proper BBSome complex assembly and its ciliary localization. Required for cilia biogenesis and both the assembly and movement of intraflagellar transport proteins along the ciliary axoneme. Plays a role in the removal of degraded mechanosensory receptors within the cilia. Plays a role in guanylyl cyclase localization in the ring-like structures at the base of the finger compartment in AFD sensory neurons. In ciliated sensory neurons, required for the sensation of nitric oxide and avoidance of NO-producing organisms like P.aeruginosa. This is BBSome complex member bbs-7 from Caenorhabditis elegans.